The chain runs to 109 residues: Large ribosomal subunit protein uL22 (109 aa).

Belongs to the universal ribosomal protein uL22 family. In terms of assembly, part of the 50S ribosomal subunit.

Functionally, this protein binds specifically to 23S rRNA; its binding is stimulated by other ribosomal proteins, e.g. L4, L17, and L20. It is important during the early stages of 50S assembly. It makes multiple contacts with different domains of the 23S rRNA in the assembled 50S subunit and ribosome. The globular domain of the protein is located near the polypeptide exit tunnel on the outside of the subunit, while an extended beta-hairpin is found that lines the wall of the exit tunnel in the center of the 70S ribosome. This Wolinella succinogenes (strain ATCC 29543 / DSM 1740 / CCUG 13145 / JCM 31913 / LMG 7466 / NCTC 11488 / FDC 602W) (Vibrio succinogenes) protein is Large ribosomal subunit protein uL22.